The sequence spans 487 residues: MVTKTLSIVFVASEVDGLIKSGGLADVAKALPKSLKELGHSVQIVMPAYKTIAGRDDAEIILTTQLEHWPHTAYQVRSLSIDGISVFAIESGDYFERAEMYAENNQAYADNGERFAFFSAATLDLLPKLLNKKPDIIHVNDWHTGLIPYLLKKRYAENEFYHQTRSVLSIHNAVFKGIFHYDEIACLSEFKSHFVPEASISHTHVSMLKAGVQCADKINAVSPNYAKELLTELGSHGMASDFQDRESDLIGILNGCDYSEWNPEKDSYIPKQFKVNRISMVRGKKACKAALQQEVSLPQKDVAMYGMVCRLTNQKGIQYLLPILEQFLKNDLQLVIVGTGDPVLAARLTEIAQEHSDKFAFIEAYDNKLAHWVEAGSDFFIMPSEFEPCGLNQIYSMAYGTLPIVREVGGLKDSVNNYDDDIENATGFSFKNPEPMELLLVLMRSLLLYSQNLNEVKRVQLHAMKQDFCWNKAALKYIEMYRTTINS.

Position 20 (lysine 20) interacts with ADP-alpha-D-glucose.

It belongs to the glycosyltransferase 1 family. Bacterial/plant glycogen synthase subfamily.

The catalysed reaction is [(1-&gt;4)-alpha-D-glucosyl](n) + ADP-alpha-D-glucose = [(1-&gt;4)-alpha-D-glucosyl](n+1) + ADP + H(+). The protein operates within glycan biosynthesis; glycogen biosynthesis. Functionally, synthesizes alpha-1,4-glucan chains using ADP-glucose. The polypeptide is Glycogen synthase (Aliivibrio fischeri (strain MJ11) (Vibrio fischeri)).